We begin with the raw amino-acid sequence, 706 residues long: MADTLEFNEIYQEVKGSMNDGRLRLSRQGVIFKNSKTGKVDNIQASELAEGVWRRVALGHGLKLLTKNGHVYKYDGFRESEFDKLSDFFKAHYRLELAEKDLCVKGWNWGTVRFGGQLLSFDIGEQPVFEIPLSNVSQCTTGKNEVTLEFHQNDDAEVSLMEVRFYVPPTQEDGVDPVEAFAQNVLSKADVIQATGDAICIFRELQCLTPRGRYDIRIYPTFLHLHGKTFDYKIPYTTVLRLFLLPHKDQRQMFFVISLDPPIKQGQTRYHFLILLFSKDEDISLTLNMNEEEVEKRFEGRLTKNMSGSLYEMVSRVMKALVNRKITVPGNFQGHSGAQCITCSYKASSGLLYPLERGFIYVHKPPVHIRFDEISFVNFARGTTTTRSFDFEIETKQGTQYTFSSIEREEYGKLFDFVNAKKLNIKNRGLKEGMKQSYDEYADSDEDQHDAYLERMKEEGKIREENANDSSDGSGEETDESFNPGEEDDDVAEEFDSNASASSSSGDGDSDRGEKKPAKKAKIVKDRKPRKKQVESKKGKDPNAPKRPMSAYMLWLNANREKIKSDHPGISITDLSKKAGELWKAMSKEKKEEWDRKAEDAKRDYEKAMKEYSVGNKSESSKMERSKKKKKKQEKQMKGKGEKKGAASKSSSSTKSSAKTMSESFKSKEFVSSDESSSAESKKEDSEDESGASPAQSSEDSASGSD.

Disordered regions lie at residues 458–551 (EEGK…PMSA) and 587–706 (SKEK…SGSD). Residues 474-496 (SGEETDESFNPGEEDDDVAEEFD) show a composition bias toward acidic residues. Residues 497-507 (SNASASSSSGD) show a composition bias toward low complexity. Positions 517 to 531 (PAKKAKIVKDRKPRK) are enriched in basic residues. Composition is skewed to basic and acidic residues over residues 532-544 (KQVE…DPNA), 587-610 (SKEK…KAMK), and 634-645 (EKQMKGKGEKKG). Positions 545–613 (PKRPMSAYML…DYEKAMKEYS (69 aa)) form a DNA-binding region, HMG box. The span at 647-664 (ASKSSSSTKSSAKTMSES) shows a compositional bias: low complexity. The span at 693–706 (SPAQSSEDSASGSD) shows a compositional bias: polar residues.

The protein belongs to the SSRP1 family. As to quaternary structure, component of the FACT complex, a stable heterodimer of SSRP1 and SUPT16H. Also a component of a CK2-SPT16-SSRP1 complex which forms following UV irradiation, composed of SSRP1, SUPT16H, CSNK2A1, CSNK2A2 and CSNK2B.

The protein resides in the nucleus. It is found in the chromosome. The protein localises to the nucleolus. Functionally, component of the FACT complex, a general chromatin factor that acts to reorganize nucleosomes. The FACT complex is involved in multiple processes that require DNA as a template such as mRNA elongation, DNA replication and DNA repair. During transcription elongation the FACT complex acts as a histone chaperone that both destabilizes and restores nucleosomal structure. It facilitates the passage of RNA polymerase II and transcription by promoting the dissociation of one histone H2A-H2B dimer from the nucleosome, then subsequently promotes the reestablishment of the nucleosome following the passage of RNA polymerase II. Binds specifically to double-stranded DNA. The chain is FACT complex subunit SSRP1 (SSRP1) from Gallus gallus (Chicken).